A 136-amino-acid chain; its full sequence is Holo-[acyl-carrier-protein] synthase (136 aa).

Positions 8 and 57 each coordinate Mg(2+).

Belongs to the P-Pant transferase superfamily. AcpS family. Requires Mg(2+) as cofactor.

The protein resides in the cytoplasm. The catalysed reaction is apo-[ACP] + CoA = holo-[ACP] + adenosine 3',5'-bisphosphate + H(+). Functionally, transfers the 4'-phosphopantetheine moiety from coenzyme A to a Ser of acyl-carrier-protein. The polypeptide is Holo-[acyl-carrier-protein] synthase (Methylorubrum extorquens (strain CM4 / NCIMB 13688) (Methylobacterium extorquens)).